A 541-amino-acid chain; its full sequence is Glucose-6-phosphate isomerase (541 aa).

Catalysis depends on Glu346, which acts as the Proton donor. Active-site residues include His377 and Lys506.

It belongs to the GPI family.

The protein resides in the cytoplasm. The catalysed reaction is alpha-D-glucose 6-phosphate = beta-D-fructose 6-phosphate. It participates in carbohydrate biosynthesis; gluconeogenesis. Its pathway is carbohydrate degradation; glycolysis; D-glyceraldehyde 3-phosphate and glycerone phosphate from D-glucose: step 2/4. Catalyzes the reversible isomerization of glucose-6-phosphate to fructose-6-phosphate. This is Glucose-6-phosphate isomerase from Rhizobium meliloti (strain 1021) (Ensifer meliloti).